The following is a 278-amino-acid chain: Bis(5'-nucleosyl)-tetraphosphatase, symmetrical (278 aa).

Belongs to the Ap4A hydrolase family.

The enzyme catalyses P(1),P(4)-bis(5'-adenosyl) tetraphosphate + H2O = 2 ADP + 2 H(+). Its function is as follows. Hydrolyzes diadenosine 5',5'''-P1,P4-tetraphosphate to yield ADP. This chain is Bis(5'-nucleosyl)-tetraphosphatase, symmetrical, found in Methylococcus capsulatus (strain ATCC 33009 / NCIMB 11132 / Bath).